Reading from the N-terminus, the 351-residue chain is Phosphoribosylformylglycinamidine cyclo-ligase (351 aa).

It belongs to the AIR synthase family.

The protein resides in the cytoplasm. It catalyses the reaction 2-formamido-N(1)-(5-O-phospho-beta-D-ribosyl)acetamidine + ATP = 5-amino-1-(5-phospho-beta-D-ribosyl)imidazole + ADP + phosphate + H(+). It participates in purine metabolism; IMP biosynthesis via de novo pathway; 5-amino-1-(5-phospho-D-ribosyl)imidazole from N(2)-formyl-N(1)-(5-phospho-D-ribosyl)glycinamide: step 2/2. The chain is Phosphoribosylformylglycinamidine cyclo-ligase from Burkholderia vietnamiensis (strain G4 / LMG 22486) (Burkholderia cepacia (strain R1808)).